Consider the following 209-residue polypeptide: Putative 3-methyladenine DNA glycosylase (209 aa).

The interval 189-209 is disordered; sequence HVSTTRLGAPKKKRQKRLERR. Residues 197 to 209 show a composition bias toward basic residues; that stretch reads APKKKRQKRLERR.

Belongs to the DNA glycosylase MPG family.

The protein is Putative 3-methyladenine DNA glycosylase of Chlorobaculum parvum (strain DSM 263 / NCIMB 8327) (Chlorobium vibrioforme subsp. thiosulfatophilum).